Here is a 256-residue protein sequence, read N- to C-terminus: Metallo-beta-lactamase type 2 (256 aa).

The N-terminal stretch at 1-29 (MKNTLLKLGVCVSLLGITPFVSTISSVQA) is a signal peptide. Zn(2+)-binding residues include H115, H117, D119, H178, and C197. Positions 200 and 209 each coordinate substrate. H239 provides a ligand contact to Zn(2+).

Belongs to the metallo-beta-lactamase superfamily. Class-B beta-lactamase family. In terms of assembly, monomer. Zn(2+) is required as a cofactor.

Its subcellular location is the periplasm. The catalysed reaction is a beta-lactam + H2O = a substituted beta-amino acid. With respect to regulation, inhibited by chelating agents such as EDTA. In terms of biological role, confers resistance to the different beta-lactams antibiotics (penicillin, cephalosporin and carbapenem) via the hydrolysis of the beta-lactam ring. Benzylpenicillin is a better substrate than cephalosporin C and ampicillin. The polypeptide is Metallo-beta-lactamase type 2 (Bacillus cereus).